We begin with the raw amino-acid sequence, 341 residues long: N-acetyl-gamma-glutamyl-phosphate reductase (341 aa).

The active site involves Cys149.

This sequence belongs to the NAGSA dehydrogenase family. Type 1 subfamily.

The protein localises to the cytoplasm. It catalyses the reaction N-acetyl-L-glutamate 5-semialdehyde + phosphate + NADP(+) = N-acetyl-L-glutamyl 5-phosphate + NADPH + H(+). The protein operates within amino-acid biosynthesis; L-arginine biosynthesis; N(2)-acetyl-L-ornithine from L-glutamate: step 3/4. Its function is as follows. Catalyzes the NADPH-dependent reduction of N-acetyl-5-glutamyl phosphate to yield N-acetyl-L-glutamate 5-semialdehyde. The chain is N-acetyl-gamma-glutamyl-phosphate reductase from Methanocaldococcus jannaschii (strain ATCC 43067 / DSM 2661 / JAL-1 / JCM 10045 / NBRC 100440) (Methanococcus jannaschii).